A 467-amino-acid polypeptide reads, in one-letter code: Multiple inositol polyphosphate phosphatase 1 (467 aa).

A signal peptide spans 1–15; the sequence is MRLLILLLLPLVAIA. Residue histidine 67 is part of the active site. Asparagine 120, asparagine 159, and asparagine 234 each carry an N-linked (GlcNAc...) asparagine glycan. Glycine 441 carries GPI-anchor amidated glycine lipidation. Residues 442–467 constitute a propeptide, removed in mature form; sequence GAPSLGSGVGGLLATTLAAMLVYLMH.

It belongs to the histidine acid phosphatase family. MINPP1 subfamily. Post-translationally, N-glycosylated.

The protein resides in the cell membrane. It localises to the apical cell membrane. It is found in the basolateral cell membrane. Its subcellular location is the cell projection. The protein localises to the filopodium. The protein resides in the cell junction. The enzyme catalyses (2R)-2,3-bisphosphoglycerate + H2O = (2R)-2-phosphoglycerate + phosphate. It catalyses the reaction 1D-myo-inositol hexakisphosphate + H2O = 1D-myo-inositol 1,2,4,5,6-pentakisphosphate + phosphate. The catalysed reaction is 1D-myo-inositol 1,2,4,5,6-pentakisphosphate + H2O = 1D-myo-inositol 1,2,5,6-tetrakisphosphate + phosphate. It carries out the reaction 1D-myo-inositol 1,2,5,6-tetrakisphosphate + H2O = 1D-myo-inositol 1,2,6-trisphosphate + phosphate. Its function is as follows. Probable multiple inositol polyphosphate phosphatase that hydrolyzes 1D-myo-inositol 1,3,4,5,6-pentakisphosphate (InsP5[2OH]) and 1D-myo-inositol hexakisphosphate (InsP6) to a range of less phosphorylated inositol phosphates. This regulates the availability of these various small molecule second messengers and metal chelators which control many aspects of cell physiology. May have a dual substrate specificity, and function as a 2,3-bisphosphoglycerate 3-phosphatase hydrolyzing 2,3-bisphosphoglycerate to 2-phosphoglycerate. 2,3-bisphosphoglycerate (BPG) is formed as part of the Rapoport-Luebering glycolytic bypass. Has a role in embryonic tracheal development where it localizes to the leading edge of actively migrating branches. In these leading cells, enhances formation and/or maintenance of filopodia which may drive branch migration and elongation by cell-cell intercalation. The function in tracheal morphogenesis is dependent on its inositol polyphosphate phosphatase activity. This Drosophila melanogaster (Fruit fly) protein is Multiple inositol polyphosphate phosphatase 1.